Reading from the N-terminus, the 423-residue chain is Gamma-glutamyl phosphate reductase (423 aa).

It belongs to the gamma-glutamyl phosphate reductase family.

The protein localises to the cytoplasm. The catalysed reaction is L-glutamate 5-semialdehyde + phosphate + NADP(+) = L-glutamyl 5-phosphate + NADPH + H(+). Its pathway is amino-acid biosynthesis; L-proline biosynthesis; L-glutamate 5-semialdehyde from L-glutamate: step 2/2. Its function is as follows. Catalyzes the NADPH-dependent reduction of L-glutamate 5-phosphate into L-glutamate 5-semialdehyde and phosphate. The product spontaneously undergoes cyclization to form 1-pyrroline-5-carboxylate. This chain is Gamma-glutamyl phosphate reductase, found in Burkholderia thailandensis (strain ATCC 700388 / DSM 13276 / CCUG 48851 / CIP 106301 / E264).